The sequence spans 115 residues: Glutaredoxin-like protein C5orf63 homolog (115 aa).

A disulfide bridge connects residues Cys40 and Cys43.

This sequence belongs to the glutaredoxin family. YDR286C subfamily.

This chain is Glutaredoxin-like protein C5orf63 homolog, found in Mus musculus (Mouse).